The sequence spans 712 residues: Ribosomal RNA large subunit methyltransferase K/L (712 aa).

Positions 46-157 constitute a THUMP domain; it reads GAYQALLHSR…RENMVVSLDL (112 aa).

The protein belongs to the methyltransferase superfamily. RlmKL family.

The protein resides in the cytoplasm. It carries out the reaction guanosine(2445) in 23S rRNA + S-adenosyl-L-methionine = N(2)-methylguanosine(2445) in 23S rRNA + S-adenosyl-L-homocysteine + H(+). The catalysed reaction is guanosine(2069) in 23S rRNA + S-adenosyl-L-methionine = N(2)-methylguanosine(2069) in 23S rRNA + S-adenosyl-L-homocysteine + H(+). Its function is as follows. Specifically methylates the guanine in position 2445 (m2G2445) and the guanine in position 2069 (m7G2069) of 23S rRNA. This Actinobacillus pleuropneumoniae serotype 3 (strain JL03) protein is Ribosomal RNA large subunit methyltransferase K/L.